The primary structure comprises 244 residues: 5-oxoprolinase subunit A (244 aa).

It belongs to the LamB/PxpA family. In terms of assembly, forms a complex composed of PxpA, PxpB and PxpC.

It catalyses the reaction 5-oxo-L-proline + ATP + 2 H2O = L-glutamate + ADP + phosphate + H(+). In terms of biological role, catalyzes the cleavage of 5-oxoproline to form L-glutamate coupled to the hydrolysis of ATP to ADP and inorganic phosphate. The sequence is that of 5-oxoprolinase subunit A from Escherichia coli O7:K1 (strain IAI39 / ExPEC).